The chain runs to 122 residues: MIQPQTYLNVADNSGARELMCIRIIGASNRRYAHIGDIIVAVIKEAIPNMPLERSEVIRAVIVRTRKELKRENGMIIRYDDNAAVIIDQKGNPKGTRVFGAIARELRQLNFTKIVSLAPEVL.

The protein belongs to the universal ribosomal protein uL14 family. As to quaternary structure, part of the 50S ribosomal subunit.

It localises to the plastid. The protein resides in the chloroplast. Its function is as follows. Binds to 23S rRNA. The chain is Large ribosomal subunit protein uL14c from Fagopyrum esculentum subsp. ancestrale (Wild buckwheat).